A 370-amino-acid polypeptide reads, in one-letter code: tRNA-specific 2-thiouridylase MnmA (370 aa).

Residues 25–32 (ALSGGVDS) and L51 each bind ATP. The active-site Nucleophile is C112. A disulfide bond links C112 and C211. G137 lines the ATP pocket. Residues 161-163 (KDQ) are interaction with tRNA. The Cysteine persulfide intermediate role is filled by C211. The interaction with tRNA stretch occupies residues 316–317 (RY).

It belongs to the MnmA/TRMU family.

The protein resides in the cytoplasm. It carries out the reaction S-sulfanyl-L-cysteinyl-[protein] + uridine(34) in tRNA + AH2 + ATP = 2-thiouridine(34) in tRNA + L-cysteinyl-[protein] + A + AMP + diphosphate + H(+). Catalyzes the 2-thiolation of uridine at the wobble position (U34) of tRNA, leading to the formation of s(2)U34. This chain is tRNA-specific 2-thiouridylase MnmA, found in Synechococcus sp. (strain JA-3-3Ab) (Cyanobacteria bacterium Yellowstone A-Prime).